The following is a 136-amino-acid chain: Large ribosomal subunit protein bL21 (136 aa).

The tract at residues arginine 107 to glutamate 136 is disordered. A compositionally biased stretch (low complexity) spans alanine 121–glutamate 136.

It belongs to the bacterial ribosomal protein bL21 family. Part of the 50S ribosomal subunit. Contacts protein L20.

This protein binds to 23S rRNA in the presence of protein L20. This Acidothermus cellulolyticus (strain ATCC 43068 / DSM 8971 / 11B) protein is Large ribosomal subunit protein bL21.